Reading from the N-terminus, the 65-residue chain is Sperm protamine P1 (65 aa).

The interval 1–65 is disordered; that stretch reads MARYRHSRSR…RYSRRRRRRY (65 aa).

Belongs to the protamine P1 family. In terms of tissue distribution, testis.

The protein resides in the nucleus. Its subcellular location is the chromosome. Functionally, protamines substitute for histones in the chromatin of sperm during the haploid phase of spermatogenesis. They compact sperm DNA into a highly condensed, stable and inactive complex. This chain is Sperm protamine P1 (PRM1), found in Lagorchestes hirsutus (Rufous hare-wallaby).